A 56-amino-acid polypeptide reads, in one-letter code: Bowman-Birk type proteinase inhibitor I-2B (56 aa).

Intrachain disulfides connect Cys-10/Cys-25, Cys-15/Cys-23, Cys-32/Cys-39, and Cys-36/Cys-51.

It belongs to the Bowman-Birk serine protease inhibitor family.

This is Bowman-Birk type proteinase inhibitor I-2B from Triticum aestivum (Wheat).